A 626-amino-acid polypeptide reads, in one-letter code: Basic helix-loop-helix ARNT-like protein 1 (626 aa).

Residues 1 to 60 form a disordered region; the sequence is MADQRMDISSTISDFMSPGPTDLLSSSLGTSGVDCNRKRKGSSTDYQESMDTDKDDPHGR. Serine 17 is modified (phosphoserine; by GSK3-beta). Low complexity predominate over residues 17–32; that stretch reads SPGPTDLLSSSLGTSG. Position 21 is a phosphothreonine; by GSK3-beta (threonine 21). The short motif at 36–41 is the Nuclear localization signal element; sequence NRKRKG. Residues 51-60 are compositionally biased toward basic and acidic residues; that stretch reads DTDKDDPHGR. One can recognise a bHLH domain in the interval 72 to 125; the sequence is NAREAHSQIEKRRRDKMNSFIDELASLVPTCNAMSRKLDKLTVLRMAVQHMKTL. Serine 78 bears the Phosphoserine mark. Residue serine 90 is modified to Phosphoserine; by CK2. The short motif at 142-152 is the Nuclear export signal 1 element; the sequence is LSDDELKHLIL. Positions 143 to 215 constitute a PAS 1 domain; that stretch reads SDDELKHLIL…EQLSSSDTAP (73 aa). A Glycyl lysine isopeptide (Lys-Gly) (interchain with G-Cter in SUMO2 and SUMO3) cross-link involves residue lysine 252. Lysine 259 is covalently cross-linked (Glycyl lysine isopeptide (Lys-Gly) (interchain with G-Cter in SUMO); alternate). A Glycyl lysine isopeptide (Lys-Gly) (interchain with G-Cter in SUMO2); alternate cross-link involves residue lysine 259. One can recognise a PAS 2 domain in the interval 326-396; sequence PQPAGGDIKV…ECHRQVLQTR (71 aa). A Nuclear export signal 2 motif is present at residues 361-369; that stretch reads LAYLPQELL. One can recognise a PAC domain in the interval 402–445; that stretch reads NCYKFKIKDGSFITLRSRWFSFMNPWTKEVEYIVSTNTVVLANV. Disordered regions lie at residues 458 to 493 and 511 to 596; these read ASPH…AGAG and GSSP…PSND. Residues 484–493 show a composition bias toward gly residues; that stretch reads IPGGTRAGAG. The segment at 508–588 is interaction with CIART; sequence RIRGSSPSSC…ISIDMIDNDQ (81 aa). The segment covering 511 to 521 has biased composition (low complexity); it reads GSSPSSCGSSP. The residue at position 538 (lysine 538) is an N6-acetyllysine.

As to quaternary structure, component of the circadian clock oscillator which includes the CRY1/2 proteins, CLOCK or NPAS2, BMAL1 or BMAL2, CSNK1D and/or CSNK1E, TIMELESS and the PER1/2/3 proteins. Forms a heterodimer with CLOCK. The CLOCK-BMAL1 heterodimer is required for E-box-dependent transactivation, for CLOCK nuclear translocation and degradation, and, for phosphorylation of both CLOCK and BMAL1. Part of a nuclear complex which also includes RACK1 and PRKCA; RACK1 and PRKCA are recruited to the complex in a circadian manner. Interacts with NPAS2. Interacts with EZH2. Interacts with SUMO3. Interacts with SIRT1. Interacts with AHR. Interacts with ID1, ID2 and ID3. Interacts with DDX4. Interacts with OGT. Interacts with EED and SUZ12. Interacts with MTA1. Interacts with CIART. Interacts with HSP90. Interacts with KAT2B and EP300. Interacts with BHLHE40/DEC1 and BHLHE41/DEC2. Interacts with RELB and the interaction is enhanced in the presence of CLOCK. Interacts with PER1, PER2, CRY1 and CRY2 and this interaction requires a translocation to the nucleus. Interaction of the CLOCK-BMAL1 heterodimer with PER or CRY inhibits transcription activation. Interaction of the CLOCK-BMAL1 with CRY1 is independent of DNA but with PER2 is off DNA. The CLOCK-BMAL1 heterodimer interacts with GSK3B. Interacts with KDM5A. Interacts with KMT2A; in a circadian manner. Interacts with UBE3A. Interacts with PRKCG. Interacts with MAGEL2. Interacts with NCOA2. Interacts with THRAP3. The CLOCK-BMAL1 heterodimer interacts with PASD1. Interacts with PASD1. Interacts with USP9X. Interacts with PIWIL2 (via PIWI domain). Interacts with HDAC3. Interacts with HNF4A. Ubiquitinated, leading to its proteasomal degradation. Deubiquitinated by USP9X. In terms of processing, O-glycosylated; contains O-GlcNAc. O-glycosylation by OGT prevents protein degradation by inhibiting ubiquitination. It also stabilizes the CLOCK-BMAL1 heterodimer thereby increasing CLOCK-BMAL1-mediated transcription of genes in the negative loop of the circadian clock such as PER1/2/3 and CRY1/2. Post-translationally, acetylated on Lys-538 by CLOCK during the repression phase of the circadian cycle. Acetylation facilitates recruitment of CRY1 protein and initiates the repression phase of the circadian cycle. Acetylated at Lys-538 by KAT5 during the activation phase of the cycle, leading to recruitment of the positive transcription elongation factor b (P-TEFb) and BRD4, followed by productive elongation of circadian transcripts. Deacetylated by SIRT1, which may result in decreased protein stability. Phosphorylated upon dimerization with CLOCK. Phosphorylation enhances the transcriptional activity, alters the subcellular localization and decreases the stability of the CLOCK-BMAL1 heterodimer by promoting its degradation. Phosphorylation shows circadian variations in the liver with a peak between CT10 to CT14. Phosphorylation at Ser-90 by CK2 is essential for its nuclear localization, its interaction with CLOCK and controls CLOCK nuclear entry. Dephosphorylation at Ser-78 is important for dimerization with CLOCK and transcriptional activity. In terms of processing, sumoylated on Lys-259 upon dimerization with CLOCK. Predominantly conjugated to poly-SUMO2/3 rather than SUMO1 and the level of these conjugates undergo rhythmic variation, peaking at CT9-CT12. Sumoylation localizes it exclusively to the PML body and promotes its ubiquitination in the PML body, ubiquitin-dependent proteasomal degradation and the transcriptional activity of the CLOCK-BMAL1 heterodimer. Post-translationally, undergoes lysosome-mediated degradation in a time-dependent manner in the liver. Highly expressed in the suprachiasmatic nucleus (SCN). Also expressed in all other tissues examined including kidney, intestine, liver, heart, spleen, brain, muscle, lung, harderian gland and eye. Low expression in kidney and spleen.

It localises to the nucleus. The protein resides in the cytoplasm. It is found in the PML body. Functionally, transcriptional activator which forms a core component of the circadian clock. The circadian clock, an internal time-keeping system, regulates various physiological processes through the generation of approximately 24 hour circadian rhythms in gene expression, which are translated into rhythms in metabolism and behavior. It is derived from the Latin roots 'circa' (about) and 'diem' (day) and acts as an important regulator of a wide array of physiological functions including metabolism, sleep, body temperature, blood pressure, endocrine, immune, cardiovascular, and renal function. Consists of two major components: the central clock, residing in the suprachiasmatic nucleus (SCN) of the brain, and the peripheral clocks that are present in nearly every tissue and organ system. Both the central and peripheral clocks can be reset by environmental cues, also known as Zeitgebers (German for 'timegivers'). The predominant Zeitgeber for the central clock is light, which is sensed by retina and signals directly to the SCN. The central clock entrains the peripheral clocks through neuronal and hormonal signals, body temperature and feeding-related cues, aligning all clocks with the external light/dark cycle. Circadian rhythms allow an organism to achieve temporal homeostasis with its environment at the molecular level by regulating gene expression to create a peak of protein expression once every 24 hours to control when a particular physiological process is most active with respect to the solar day. Transcription and translation of core clock components (CLOCK, NPAS2, BMAL1, BMAL2, PER1, PER2, PER3, CRY1 and CRY2) plays a critical role in rhythm generation, whereas delays imposed by post-translational modifications (PTMs) are important for determining the period (tau) of the rhythms (tau refers to the period of a rhythm and is the length, in time, of one complete cycle). A diurnal rhythm is synchronized with the day/night cycle, while the ultradian and infradian rhythms have a period shorter and longer than 24 hours, respectively. Disruptions in the circadian rhythms contribute to the pathology of cardiovascular diseases, cancer, metabolic syndromes and aging. A transcription/translation feedback loop (TTFL) forms the core of the molecular circadian clock mechanism. Transcription factors, CLOCK or NPAS2 and BMAL1 or BMAL2, form the positive limb of the feedback loop, act in the form of a heterodimer and activate the transcription of core clock genes and clock-controlled genes (involved in key metabolic processes), harboring E-box elements (5'-CACGTG-3') within their promoters. The core clock genes: PER1/2/3 and CRY1/2 which are transcriptional repressors form the negative limb of the feedback loop and interact with the CLOCK|NPAS2-BMAL1|BMAL2 heterodimer inhibiting its activity and thereby negatively regulating their own expression. This heterodimer also activates nuclear receptors NR1D1/2 and RORA/B/G, which form a second feedback loop and which activate and repress BMAL1 transcription, respectively. BMAL1 positively regulates myogenesis and negatively regulates adipogenesis via the transcriptional control of the genes of the canonical Wnt signaling pathway. Plays a role in normal pancreatic beta-cell function; regulates glucose-stimulated insulin secretion via the regulation of antioxidant genes NFE2L2/NRF2 and its targets SESN2, PRDX3, CCLC and CCLM. Negatively regulates the mTORC1 signaling pathway; regulates the expression of MTOR and DEPTOR. Controls diurnal oscillations of Ly6C inflammatory monocytes; rhythmic recruitment of the PRC2 complex imparts diurnal variation to chemokine expression that is necessary to sustain Ly6C monocyte rhythms. Regulates the expression of HSD3B2, STAR, PTGS2, CYP11A1, CYP19A1 and LHCGR in the ovary and also the genes involved in hair growth. Plays an important role in adult hippocampal neurogenesis by regulating the timely entry of neural stem/progenitor cells (NSPCs) into the cell cycle and the number of cell divisions that take place prior to cell-cycle exit. Regulates the circadian expression of CIART and KLF11. The CLOCK-BMAL1 heterodimer regulates the circadian expression of SERPINE1/PAI1, VWF, B3, CCRN4L/NOC, NAMPT, DBP, MYOD1, PPARGC1A, PPARGC1B, SIRT1, GYS2, F7, NGFR, GNRHR, BHLHE40/DEC1, ATF4, MTA1, KLF10 and also genes implicated in glucose and lipid metabolism. Promotes rhythmic chromatin opening, regulating the DNA accessibility of other transcription factors. The NPAS2-BMAL1 heterodimer positively regulates the expression of MAOA, F7 and LDHA and modulates the circadian rhythm of daytime contrast sensitivity by regulating the rhythmic expression of adenylate cyclase type 1 (ADCY1) in the retina. The preferred binding motif for the CLOCK-BMAL1 heterodimer is 5'-CACGTGA-3', which contains a flanking adenine nucleotide at the 3-prime end of the canonical 6-nucleotide E-box sequence. CLOCK specifically binds to the half-site 5'-CAC-3', while BMAL1 binds to the half-site 5'-GTGA-3'. The CLOCK-BMAL1 heterodimer also recognizes the non-canonical E-box motifs 5'-AACGTGA-3' and 5'-CATGTGA-3'. Essential for the rhythmic interaction of CLOCK with ASS1 and plays a critical role in positively regulating CLOCK-mediated acetylation of ASS1. Plays a role in protecting against lethal sepsis by limiting the expression of immune checkpoint protein CD274 in macrophages in a PKM2-dependent manner. Regulates the diurnal rhythms of skeletal muscle metabolism via transcriptional activation of genes promoting triglyceride synthesis (DGAT2) and metabolic efficiency (COQ10B). This chain is Basic helix-loop-helix ARNT-like protein 1 (Bmal1), found in Nannospalax galili (Northern Israeli blind subterranean mole rat).